A 183-amino-acid chain; its full sequence is Chromophore lyase CpcT/CpeT 4 (183 aa).

This sequence belongs to the CpcT/CpeT biliprotein lyase family.

Covalently attaches a chromophore to Cys residue(s) of phycobiliproteins. In Gloeobacter violaceus (strain ATCC 29082 / PCC 7421), this protein is Chromophore lyase CpcT/CpeT 4.